A 635-amino-acid polypeptide reads, in one-letter code: ATP-binding protein Uup (635 aa).

2 ABC transporter domains span residues 1–253 (MSLI…RVEE) and 320–546 (FEME…KTEE). Residues 36–43 (GRNGAGKS) and 352–359 (GPNGCGKT) each bind ATP. The segment at 551 to 635 (KAETVKRSSS…EYLEALKNGG (85 aa)) is C-terminal domain (CTD), binds DNA, required to complement a deletion mutant. Positions 563–631 (SYKLQRELEQ…FERWEYLEAL (69 aa)) form a coiled coil.

This sequence belongs to the ABC transporter superfamily. ABCF family. Uup subfamily.

The protein localises to the cytoplasm. It catalyses the reaction ATP + H2O = ADP + phosphate + H(+). Its activity is regulated as follows. ATPase activity inhibited by N-ethylmaleimide but not by vanadate. Its function is as follows. Probably plays a role in ribosome assembly or function; overexpression suppresses cold-sensitive growth of a bipA deletion. May be involved in resolution of branched DNA intermediates that result from template switching in postreplication gaps. Binds DNA at Holliday junctions. May be involved in the correct segregation of nucleoids. Has ATPase activity, binds DNA non-sequence specifically; the presence of DNA does not change the ATPase activity. Mutations in this gene cause an increase in RecA-independent precise excision of transposons and insertion elements, and also reduce bacteriophage Mu growth. Genetic interactions among priB, dam, lexA, nagC, polA, rdgB, rdgB, rep and uup link the PriA-PriB replication restart pathway to DNA double-strand break repair. The chain is ATP-binding protein Uup from Escherichia coli (strain K12).